The following is a 356-amino-acid chain: D-alanine--D-alanine ligase (356 aa).

The region spanning 134–339 is the ATP-grasp domain; sequence KQLFEHRGLP…YSDLITKLID (206 aa). ATP is bound at residue 167-222; sequence KDKLTYPVFVKPANLGSSVGISKCNNEDELKSGIEEAFQFDRKLVIEQGINAREVE. Residues Asp-293, Glu-306, and Asn-308 each coordinate Mg(2+).

This sequence belongs to the D-alanine--D-alanine ligase family. Mg(2+) is required as a cofactor. Requires Mn(2+) as cofactor.

The protein resides in the cytoplasm. It catalyses the reaction 2 D-alanine + ATP = D-alanyl-D-alanine + ADP + phosphate + H(+). It functions in the pathway cell wall biogenesis; peptidoglycan biosynthesis. Functionally, cell wall formation. The protein is D-alanine--D-alanine ligase of Staphylococcus haemolyticus (strain JCSC1435).